A 468-amino-acid chain; its full sequence is ATP synthase subunit beta (468 aa).

Residue 155–162 (GGAGVGKT) coordinates ATP.

This sequence belongs to the ATPase alpha/beta chains family. F-type ATPases have 2 components, CF(1) - the catalytic core - and CF(0) - the membrane proton channel. CF(1) has five subunits: alpha(3), beta(3), gamma(1), delta(1), epsilon(1). CF(0) has three main subunits: a(1), b(2) and c(9-12). The alpha and beta chains form an alternating ring which encloses part of the gamma chain. CF(1) is attached to CF(0) by a central stalk formed by the gamma and epsilon chains, while a peripheral stalk is formed by the delta and b chains.

It is found in the cell inner membrane. It carries out the reaction ATP + H2O + 4 H(+)(in) = ADP + phosphate + 5 H(+)(out). Produces ATP from ADP in the presence of a proton gradient across the membrane. The catalytic sites are hosted primarily by the beta subunits. In Bdellovibrio bacteriovorus (strain ATCC 15356 / DSM 50701 / NCIMB 9529 / HD100), this protein is ATP synthase subunit beta.